The primary structure comprises 104 residues: Large ribosomal subunit protein bL21 (104 aa).

Belongs to the bacterial ribosomal protein bL21 family. Part of the 50S ribosomal subunit. Contacts protein L20.

Its function is as follows. This protein binds to 23S rRNA in the presence of protein L20. This Endomicrobium trichonymphae protein is Large ribosomal subunit protein bL21.